The following is a 269-amino-acid chain: Gap junction gamma-3 protein (269 aa).

Residues Met1–Arg33 are Extracellular-facing. The helical transmembrane segment at Phe34 to Val54 threads the bilayer. Residues Phe55–Arg86 lie on the Cytoplasmic side of the membrane. Residues Phe87–Leu107 traverse the membrane as a helical segment. Residues Tyr108–Leu145 are Extracellular-facing. A helical transmembrane segment spans residues Leu146–Val166. Residues Gln167–Asn205 lie on the Cytoplasmic side of the membrane. A helical membrane pass occupies residues Ile206–Gly226. The Extracellular segment spans residues Leu227–Phe269. Ser261 bears the Phosphoserine mark.

Belongs to the connexin family. Gamma-type subfamily. As to quaternary structure, a connexon is composed of a hexamer of connexins. In terms of tissue distribution, CNS specific. Expression is restricted to brain, spinal cord, and sciatic nerve.

The protein localises to the cell membrane. It localises to the cell junction. It is found in the gap junction. Its function is as follows. One gap junction consists of a cluster of closely packed pairs of transmembrane channels, the connexons, through which materials of low MW diffuse from one cell to a neighboring cell. This chain is Gap junction gamma-3 protein (Gjc3), found in Mus musculus (Mouse).